A 60-amino-acid polypeptide reads, in one-letter code: UPF0181 protein ESA_01442 (60 aa).

Belongs to the UPF0181 family.

The sequence is that of UPF0181 protein ESA_01442 from Cronobacter sakazakii (strain ATCC BAA-894) (Enterobacter sakazakii).